Here is a 365-residue protein sequence, read N- to C-terminus: uncharacterized protein (365 aa).

The protein belongs to the mycobacterial PPE family.

This is an uncharacterized protein from Mycobacterium tuberculosis (strain ATCC 25618 / H37Rv).